Here is a 607-residue protein sequence, read N- to C-terminus: Granule-bound starch synthase 1, chloroplastic/amyloplastic (607 aa).

The N-terminal 77 residues, 1–77 (MASITASHHF…RPGCSATIVC (77 aa)), are a transit peptide targeting the chloroplast. Residue Lys95 coordinates ADP-alpha-D-glucose. Residues 585–607 (SGSEPGVEGEEIAPLAKENVATP) form a disordered region.

The protein belongs to the glycosyltransferase 1 family. Bacterial/plant glycogen synthase subfamily.

The protein resides in the plastid. The protein localises to the chloroplast. It localises to the amyloplast. It carries out the reaction an NDP-alpha-D-glucose + [(1-&gt;4)-alpha-D-glucosyl](n) = [(1-&gt;4)-alpha-D-glucosyl](n+1) + a ribonucleoside 5'-diphosphate + H(+). It functions in the pathway glycan biosynthesis; starch biosynthesis. This Solanum tuberosum (Potato) protein is Granule-bound starch synthase 1, chloroplastic/amyloplastic (WAXY).